The primary structure comprises 124 residues: uncharacterized protein (124 aa).

Residues 82 to 124 (SDLGIEGGERAQGQNAHSVHGPGLQTERGGSQLQMVGHPLREL) form a disordered region.

This is an uncharacterized protein from Human cytomegalovirus (strain AD169) (HHV-5).